The chain runs to 101 residues: Gamma-secretase subunit PEN-2 (101 aa).

Residues 1 to 17 lie on the Cytoplasmic side of the membrane; that stretch reads MNLERIPNEEKLSLCRR. Residues 18-36 constitute an intramembrane region (helical); it reads YYLGGFAFLPFLWLVNILW. Residues 37 to 57 are Cytoplasmic-facing; it reads FFKEAFLKPAYTEQPQIKSYV. The chain crosses the membrane as a helical span at residues 58-78; that stretch reads KKSALGLLLWVAVLTTWITVF. The Lumenal segment spans residues 79–101; it reads QHFRAQWGEVGDYLSFTIPLGTA.

This sequence belongs to the PEN-2 family. As to quaternary structure, the functional gamma-secretase complex is composed of at least four polypeptides: a presenilin homodimer (psen1 or psen2), nicastrin (ncstn), aph1 (aph1a or aph1b) and psenen.

It localises to the endoplasmic reticulum membrane. Its subcellular location is the golgi apparatus. The protein resides in the golgi stack membrane. The protein localises to the cell membrane. It is found in the membrane. Functionally, essential subunit of the gamma-secretase complex, an endoprotease complex that catalyzes the intramembrane cleavage of integral membrane proteins such as Notch receptors and APP (amyloid-beta precursor protein). The gamma-secretase complex plays a role in Notch and Wnt signaling cascades and regulation of downstream processes via its role in processing key regulatory proteins. The sequence is that of Gamma-secretase subunit PEN-2 (psenen) from Danio rerio (Zebrafish).